Reading from the N-terminus, the 330-residue chain is Ribosomal RNA small subunit methyltransferase H (330 aa).

S-adenosyl-L-methionine-binding positions include 35–37 (GGY), D53, F80, D101, and Q108.

It belongs to the methyltransferase superfamily. RsmH family.

It is found in the cytoplasm. It catalyses the reaction cytidine(1402) in 16S rRNA + S-adenosyl-L-methionine = N(4)-methylcytidine(1402) in 16S rRNA + S-adenosyl-L-homocysteine + H(+). Its function is as follows. Specifically methylates the N4 position of cytidine in position 1402 (C1402) of 16S rRNA. The polypeptide is Ribosomal RNA small subunit methyltransferase H (Rhodopseudomonas palustris (strain BisB18)).